The primary structure comprises 338 residues: MO25-like protein 2 (338 aa).

This sequence belongs to the Mo25 family.

The protein resides in the cytoplasm. Its subcellular location is the cytoskeleton. It is found in the spindle pole. Functionally, regulates asymmetric cell division in Q.p neuroblast lineage. Plays a role in cell shedding during embryogenesis. This is MO25-like protein 2 (mop-25.2) from Caenorhabditis elegans.